We begin with the raw amino-acid sequence, 578 residues long: Probable ATP-dependent RNA helicase DDX55 homolog (578 aa).

The short motif at 7–37 is the Q motif element; the sequence is PVALKTFREKLGPELLEVFDKSYKSFTDVQV. Positions 40-218 constitute a Helicase ATP-binding domain; it reads GTHLLNLSDV…VFGLRNAKQV (179 aa). 53 to 60 contributes to the ATP binding site; that stretch reads SPTGSGKT. A DEAD box motif is present at residues 166-169; the sequence is DEAD. Residues 231-393 form the Helicase C-terminal domain; the sequence is TLKNYYVECR…EIKVPTNNSR (163 aa). The disordered stretch occupies residues 507–557; the sequence is AAKDKKRREKEARKLKKMGGRFRNGGGTGRKAEEKKALKRKAEEEDDAQND. Positions 510 to 526 are enriched in basic residues; it reads DKKRREKEARKLKKMGG. The segment covering 536–549 has biased composition (basic and acidic residues); that stretch reads RKAEEKKALKRKAE.

This sequence belongs to the DEAD box helicase family. DDX55/SPB4 subfamily.

The catalysed reaction is ATP + H2O = ADP + phosphate + H(+). Functionally, probable ATP-binding RNA helicase. In Caenorhabditis elegans, this protein is Probable ATP-dependent RNA helicase DDX55 homolog.